The following is a 105-amino-acid chain: Small ribosomal subunit protein uS10 (105 aa).

The protein belongs to the universal ribosomal protein uS10 family. Part of the 30S ribosomal subunit.

Functionally, involved in the binding of tRNA to the ribosomes. The chain is Small ribosomal subunit protein uS10 from Crocosphaera subtropica (strain ATCC 51142 / BH68) (Cyanothece sp. (strain ATCC 51142)).